The chain runs to 697 residues: Elongation factor G 2 (697 aa).

The tr-type G domain maps to 5-280 (SKYRNIGIFA…AVVDYLPAPD (276 aa)). Residues 14–21 (AHVDAGKT), 78–82 (DTPGH), and 132–135 (NKLD) each bind GTP.

This sequence belongs to the TRAFAC class translation factor GTPase superfamily. Classic translation factor GTPase family. EF-G/EF-2 subfamily.

Its subcellular location is the cytoplasm. Its function is as follows. Catalyzes the GTP-dependent ribosomal translocation step during translation elongation. During this step, the ribosome changes from the pre-translocational (PRE) to the post-translocational (POST) state as the newly formed A-site-bound peptidyl-tRNA and P-site-bound deacylated tRNA move to the P and E sites, respectively. Catalyzes the coordinated movement of the two tRNA molecules, the mRNA and conformational changes in the ribosome. This Shewanella denitrificans (strain OS217 / ATCC BAA-1090 / DSM 15013) protein is Elongation factor G 2.